We begin with the raw amino-acid sequence, 208 residues long: Ribonuclease HII (208 aa).

Residues 12 to 201 enclose the RNase H type-2 domain; sequence ELVAGVDEVG…VRALLEPVAV (190 aa). The a divalent metal cation site is built by Asp-18, Glu-19, and Asp-110.

It belongs to the RNase HII family. It depends on Mn(2+) as a cofactor. Mg(2+) serves as cofactor.

The protein resides in the cytoplasm. It catalyses the reaction Endonucleolytic cleavage to 5'-phosphomonoester.. Functionally, endonuclease that specifically degrades the RNA of RNA-DNA hybrids. The sequence is that of Ribonuclease HII from Ectopseudomonas mendocina (strain ymp) (Pseudomonas mendocina).